The chain runs to 304 residues: Probable UDP-3-O-acylglucosamine N-acyltransferase 2, mitochondrial (304 aa).

A mitochondrion-targeting transit peptide spans methionine 1–glutamine 47. UDP-N-acetyl-alpha-D-glucosamine is bound at residue phenylalanine 159 to phenylalanine 161. Hexadecanoate-binding residues include aspartate 209 and glutamine 213. The active-site Proton acceptor is the histidine 216. UDP-N-acetyl-alpha-D-glucosamine is bound by residues asparagine 217, serine 235, and histidine 253.

It belongs to the transferase hexapeptide repeat family. LpxD subfamily. Homotrimer.

It localises to the mitochondrion. It carries out the reaction a UDP-3-O-[(3R)-3-hydroxyacyl]-alpha-D-glucosamine + a (3R)-hydroxyacyl-[ACP] = a UDP-2-N,3-O-bis[(3R)-3-hydroxyacyl]-alpha-D-glucosamine + holo-[ACP] + H(+). Its pathway is glycolipid biosynthesis; lipid IV(A) biosynthesis; lipid IV(A) from (3R)-3-hydroxytetradecanoyl-[acyl-carrier-protein] and UDP-N-acetyl-alpha-D-glucosamine: step 3/6. In terms of biological role, involved in the biosynthesis of lipid A, a phosphorylated glycolipid that in bacteria anchors the lipopolysaccharide to the outer membrane of the cell. Lipid A-like molecules in plants may serve as structural components of the outer membranes of mitochondria and/or chloroplasts, or may be involved in signal transduction or plant defense responses. This chain is Probable UDP-3-O-acylglucosamine N-acyltransferase 2, mitochondrial (LPXD2), found in Arabidopsis thaliana (Mouse-ear cress).